We begin with the raw amino-acid sequence, 149 residues long: Large ribosomal subunit protein bL9 (149 aa).

This sequence belongs to the bacterial ribosomal protein bL9 family.

Its function is as follows. Binds to the 23S rRNA. The chain is Large ribosomal subunit protein bL9 from Persephonella marina (strain DSM 14350 / EX-H1).